Here is a 228-residue protein sequence, read N- to C-terminus: Nuclear phosphoprotein UL3 homolog (228 aa).

This sequence belongs to the alphaherpesvirinae HHV-1 UL3 family. In terms of processing, phosphorylated.

Its subcellular location is the host nucleus. In Gallus gallus (Chicken), this protein is Nuclear phosphoprotein UL3 homolog (MDV015).